A 222-amino-acid polypeptide reads, in one-letter code: Myosin regulatory light chain 2 (222 aa).

Positions 1 to 65 are disordered; sequence MADEKKKVKK…RGSRKSKRAG (65 aa). An N-acetylalanine modification is found at alanine 2. Residues 19–53 show a composition bias toward low complexity; the sequence is TSETASEAASEAATPAPAATPAPAASATGSKRASG. 2 positions are modified to phosphoserine: serine 66 and serine 67. 3 EF-hand domains span residues 75-110, 147-180, and 181-216; these read KQIAEFKEAFQLMDADKDGIIGKNDLRAAFDSVGKI, DEDEVVIAAFKTFDNDGLIDGDKFREMLMNFGDK, and FTMKEVDDAYDQMVIDDKNQIDTAALIEMLTGKGEE. Ca(2+) contacts are provided by aspartate 88, aspartate 90, aspartate 92, and aspartate 99.

Myosin is a hexamer of 2 heavy chains and 4 light chains.

This is Myosin regulatory light chain 2 (Mlc2) from Drosophila melanogaster (Fruit fly).